Consider the following 692-residue polypeptide: Elongation factor G (692 aa).

The 275-residue stretch at 8–282 folds into the tr-type G domain; sequence KDTRNIGIMA…AVLDYLPSPL (275 aa). GTP is bound by residues 17 to 24, 81 to 85, and 135 to 138; these read AHIDAGKT, DTPGH, and NKMD.

This sequence belongs to the TRAFAC class translation factor GTPase superfamily. Classic translation factor GTPase family. EF-G/EF-2 subfamily.

Its subcellular location is the cytoplasm. Its function is as follows. Catalyzes the GTP-dependent ribosomal translocation step during translation elongation. During this step, the ribosome changes from the pre-translocational (PRE) to the post-translocational (POST) state as the newly formed A-site-bound peptidyl-tRNA and P-site-bound deacylated tRNA move to the P and E sites, respectively. Catalyzes the coordinated movement of the two tRNA molecules, the mRNA and conformational changes in the ribosome. In Shouchella clausii (strain KSM-K16) (Alkalihalobacillus clausii), this protein is Elongation factor G.